The primary structure comprises 161 residues: Regulator of ribonuclease activity A (161 aa).

Belongs to the RraA family. Homotrimer. Binds to both RNA-binding sites in the C-terminal region of Rne and to RhlB.

It localises to the cytoplasm. Globally modulates RNA abundance by binding to RNase E (Rne) and regulating its endonucleolytic activity. Can modulate Rne action in a substrate-dependent manner by altering the composition of the degradosome. Modulates RNA-binding and helicase activities of the degradosome. The protein is Regulator of ribonuclease activity A of Serratia proteamaculans (strain 568).